A 100-amino-acid chain; its full sequence is C-X-C motif chemokine 2 (100 aa).

Positions Met1–Gly27 are cleaved as a signal peptide. Cystine bridges form between Cys36/Cys62 and Cys38/Cys78.

The protein belongs to the intercrine alpha (chemokine CxC) family. Homotetramer.

The protein localises to the secreted. Functionally, chemotactic for human polymorphonuclear leukocytes but does not induce chemokinesis or an oxidative burst. The chain is C-X-C motif chemokine 2 (Cxcl2) from Mus musculus (Mouse).